The primary structure comprises 1083 residues: Ubiquitin-protein ligase E3C (1083 aa).

2 stretches are compositionally biased toward basic and acidic residues: residues 1–10 (MFSFEGDFKT) and 20–40 (SRKEEKASLLHRTQEERRKRE). The segment at 1-40 (MFSFEGDFKTRPKVSLGGASRKEEKASLLHRTQEERRKRE) is disordered. The interval 1–60 (MFSFEGDFKTRPKVSLGGASRKEEKASLLHRTQEERRKREEERRRLKNAVIIQSFIRGYR) is cis-determinant of acceptor ubiquitin-binding. The IQ domain occupies 45 to 74 (RLKNAVIIQSFIRGYRDRKQQYFIQRSAFD). The segment at 354–386 (ASPTGTGCPDSTSDSEDDNEETDQPNSPEDGRV) is disordered. The span at 366–376 (SDSEDDNEETD) shows a compositional bias: acidic residues. The HECT domain maps to 744 to 1083 (NEPDLKKRIR…IECAAGFELS (340 aa)). Residue Lys-903 forms a Glycyl lysine isopeptide (Lys-Gly) (interchain with G-Cter in ubiquitin); by autocatalysis linkage. Cys-1051 acts as the Glycyl thioester intermediate in catalysis.

It belongs to the UBE3C family. Interacts with 26S proteasomes. Interacts (via the HECT domain) with UBE2D1 and, less efficiently, with UBE2L3. Autoubiquitinated; promoting its own degradation.

It catalyses the reaction S-ubiquitinyl-[E2 ubiquitin-conjugating enzyme]-L-cysteine + [acceptor protein]-L-lysine = [E2 ubiquitin-conjugating enzyme]-L-cysteine + N(6)-ubiquitinyl-[acceptor protein]-L-lysine.. Its pathway is protein modification; protein ubiquitination. Its function is as follows. E3 ubiquitin-protein ligase that specifically catalyzes 'Lys-29'- and 'Lys-48'-linked polyubiquitin chains. Accepts ubiquitin from the E2 ubiquitin-conjugating enzyme UBE2D1 in the form of a thioester and then directly transfers the ubiquitin to targeted substrates. Associates with the proteasome and promotes elongation of ubiquitin chains on substrates bound to the 26S proteasome. Also catalyzes 'Lys-29'- and 'Lys-48'-linked ubiquitination of 26S proteasome subunit ADRM1/RPN13 in response to proteotoxic stress, impairing the ability of the proteasome to bind and degrade ubiquitin-conjugated proteins. Acts as a negative regulator of autophagy by mediating 'Lys-29'- and 'Lys-48'-linked ubiquitination of PIK3C3/VPS34, promoting its degradation. Can assemble unanchored poly-ubiquitin chains in either 'Lys-29'- or 'Lys-48'-linked polyubiquitin chains; with some preference for 'Lys-48' linkages. Acts as a negative regulator of type I interferon by mediating 'Lys-48'-linked ubiquitination of IRF3 and IRF7, leading to their degradation by the proteasome. Catalyzes ubiquitination and degradation of CAND2. This chain is Ubiquitin-protein ligase E3C, found in Mus musculus (Mouse).